The chain runs to 567 residues: Signal transducer and activator of transcription b (567 aa).

In terms of domain architecture, SH2 spans 449–548 (WYDGLVYGFC…LGGRNKPRIR (100 aa)).

The protein belongs to the transcription factor STAT family. May interact with sodium-dependent transporter snf-12; the interaction is probably direct.

The protein localises to the cytoplasm. Its subcellular location is the nucleus. It is found in the vesicle. Functionally, carries out a dual function: signal transduction and activation of transcription. Required, in concert with transcription factor elt-3, for up-regulation of the vacuolar H(+)-ATPase and acceleration of lysosome maturation at molt. As part of the innate immune response to molting and injury of the adult epidermis, positively regulates the expression of epidermal antimicrobial peptides, such as nlp-29. Through positively modulating the expression of epidermal antimicrobial peptides, such as nlp-29, plays a role in resistance to fungal infection and in the response to physical wounding and phorbol ester PMA treatment. Functions cell autonomously in the epidermis, in concert with sodium-dependent transporter snf-12, probably acting at vesicular membranes, downstream of a p38 MAPK/pmk-1 pathway. This Caenorhabditis elegans protein is Signal transducer and activator of transcription b.